The chain runs to 750 residues: Photosystem I P700 chlorophyll a apoprotein A1 (750 aa).

The next 8 helical transmembrane spans lie at 70–93, 156–179, 195–219, 291–309, 346–369, 385–411, 433–455, and 531–549; these read VFSA…FHGA, LYCT…FHYH, LNHH…HVSL, IAHH…GHMY, WHAQ…HHMY, LSLF…IFMV, AIIS…LYIH, and FLVH…LILL. Residues cysteine 573 and cysteine 582 each contribute to the [4Fe-4S] cluster site. A run of 2 helical transmembrane segments spans residues 589-610 and 664-686; these read HVFL…HFSW and LSAY…MFLF. Histidine 675 lines the chlorophyll a' pocket. The chlorophyll a site is built by methionine 683 and tyrosine 691. Tryptophan 692 provides a ligand contact to phylloquinone. A helical membrane pass occupies residues 724-744; that stretch reads AVGVTHYLLGGIATTWAFFLA.

It belongs to the PsaA/PsaB family. In terms of assembly, the PsaA/B heterodimer binds the P700 chlorophyll special pair and subsequent electron acceptors. PSI consists of a core antenna complex that captures photons, and an electron transfer chain that converts photonic excitation into a charge separation. The eukaryotic PSI reaction center is composed of at least 11 subunits. P700 is a chlorophyll a/chlorophyll a' dimer, A0 is one or more chlorophyll a, A1 is one or both phylloquinones and FX is a shared 4Fe-4S iron-sulfur center. is required as a cofactor.

Its subcellular location is the plastid. The protein resides in the chloroplast thylakoid membrane. It catalyses the reaction reduced [plastocyanin] + hnu + oxidized [2Fe-2S]-[ferredoxin] = oxidized [plastocyanin] + reduced [2Fe-2S]-[ferredoxin]. In terms of biological role, psaA and PsaB bind P700, the primary electron donor of photosystem I (PSI), as well as the electron acceptors A0, A1 and FX. PSI is a plastocyanin-ferredoxin oxidoreductase, converting photonic excitation into a charge separation, which transfers an electron from the donor P700 chlorophyll pair to the spectroscopically characterized acceptors A0, A1, FX, FA and FB in turn. Oxidized P700 is reduced on the lumenal side of the thylakoid membrane by plastocyanin. This chain is Photosystem I P700 chlorophyll a apoprotein A1, found in Calycanthus floridus var. glaucus (Eastern sweetshrub).